The sequence spans 204 residues: Large ribosomal subunit protein uL4 (204 aa).

The tract at residues 53 to 74 (AYVSGGGKKPWRQKGRGGARAG) is disordered.

The protein belongs to the universal ribosomal protein uL4 family. In terms of assembly, part of the 50S ribosomal subunit.

Functionally, one of the primary rRNA binding proteins, this protein initially binds near the 5'-end of the 23S rRNA. It is important during the early stages of 50S assembly. It makes multiple contacts with different domains of the 23S rRNA in the assembled 50S subunit and ribosome. In terms of biological role, forms part of the polypeptide exit tunnel. The sequence is that of Large ribosomal subunit protein uL4 from Campylobacter curvus (strain 525.92).